Reading from the N-terminus, the 203-residue chain is Reticulon-like protein B12 (203 aa).

The Reticulon domain occupies 24-203 (VADVMLWRKK…WANPENKKLS (180 aa)). 3 helical membrane passes run 34–54 (NVSVGIVTVTIASWMVFEAFA), 55–75 (YTIFTLISSVLLLLLSILFLW), and 132–152 (VAVSLFLLSLIGSLMDFQTLC).

The protein resides in the endoplasmic reticulum membrane. The protein is Reticulon-like protein B12 (RTNLB12) of Arabidopsis thaliana (Mouse-ear cress).